The primary structure comprises 398 residues: Alpha-ketoglutarate-dependent dioxygenase bsc9 (398 aa).

Fe cation-binding residues include His167 and Asp169. Thr212 serves as a coordination point for 2-oxoglutarate. His365 contacts Fe cation. Residue Arg377 participates in 2-oxoglutarate binding.

Belongs to the TfdA dioxygenase family. It depends on Fe(2+) as a cofactor.

It participates in mycotoxin biosynthesis. In terms of biological role, alpha-ketoglutarate dependent dioxygenase; part of the gene cluster that mediates the biosynthesis of the diterpene glucoside brassicicene C. In the first step of the brassicicene C biosynthesis, the bifunctional diterpene synthase bsc8 that possesses both prenyl transferase and terpene cyclase activity, converts isopentenyl diphosphate and dimethylallyl diphosphate into geranylgeranyl diphosphate (GGDP) that is further converted into fusicocca-2,10(14)-diene, the first precursor for brassicicene C. Fusicocca-2,10(14)-diene is then substrate of cytochrome P450 monooxygenase bsc1 for hydroxylation at the C-8 position. Oxidation at C-16 position to aldehyde is then catalyzed by the cytochrome P450 monooyxygenase bsc7, yielding fusicocca-2,10(14)-diene-8-beta,16-diol. Follows the isomerization of the double bond and reduction of aldehyde to alcohol catalyzed by the short-chain dehydrogenase/reductase bsc3 to yield the diol compound fusicocca-1,10(14)-diene-8 beta,16-diol. The next step is the oxidation at the C-3 position of fusicocca-2,10(14)-diene-8-beta,16-diol catalyzed by the alpha-ketoglutarate dependent dioxygenase bsc9, to produce a triol compound. Methylation of the hydroxy group at position 16 is performed by the methyltransferase bsc6. 16-O-methylation is followed by oxidation at the C-13 position to ketone and an alkyl shift of the methyl group leads to brassicicene C. Although the probable acetyltransferase bsc4 is included in the gene cluster, no acetylation reactions are necessary for brassicicene C biosynthesis. However, the fact that brassicicene E, which is a structurally related compound having an acetoxy group at position 12, was previously isolated from another strain of A.brassicicola suggests that the ATCC 96836 strain might also produce a small amount of brassicicene E. This is Alpha-ketoglutarate-dependent dioxygenase bsc9 from Alternaria brassicicola (Dark leaf spot agent).